A 261-amino-acid polypeptide reads, in one-letter code: Ethanolamine ammonia-lyase small subunit (261 aa).

Positions 158, 179, and 208 each coordinate adenosylcob(III)alamin.

This sequence belongs to the EutC family. As to quaternary structure, the basic unit is a heterodimer which dimerizes to form tetramers. The heterotetramers trimerize; 6 large subunits form a core ring with 6 small subunits projecting outwards. Requires adenosylcob(III)alamin as cofactor.

The protein localises to the bacterial microcompartment. It catalyses the reaction ethanolamine = acetaldehyde + NH4(+). It participates in amine and polyamine degradation; ethanolamine degradation. Its function is as follows. Catalyzes the deamination of various vicinal amino-alcohols to oxo compounds. Allows this organism to utilize ethanolamine as the sole source of nitrogen and carbon in the presence of external vitamin B12. The protein is Ethanolamine ammonia-lyase small subunit of Bradyrhizobium diazoefficiens (strain JCM 10833 / BCRC 13528 / IAM 13628 / NBRC 14792 / USDA 110).